Consider the following 150-residue polypeptide: Transcription antitermination protein NusB (150 aa).

The protein belongs to the NusB family.

Involved in transcription antitermination. Required for transcription of ribosomal RNA (rRNA) genes. Binds specifically to the boxA antiterminator sequence of the ribosomal RNA (rrn) operons. This Streptococcus pyogenes serotype M2 (strain MGAS10270) protein is Transcription antitermination protein NusB.